The chain runs to 485 residues: Vacuolar fusion protein CCZ1 homolog (485 aa).

It belongs to the CCZ1 family. In terms of assembly, component of the Mon1-Ccz1 guanyl-nucleotide exchange factor complex made up of Mon1, Ccz1 and Bulli; the interaction of Bulli with the Mon1-Ccz1 heterodimer is mediated via the C-terminal Mic1 domain of Bulli. Mon1 and Ccz1 form a stable complex which displays Rab7 GEF activity with or without Bulli; GEF activity is enhanced by Bulli possibly by improving membrane association of the complex. Interacts with Rab5 and Rab7; preferentially binds GTP-bound Rab5 and GDP-bound Rab7.

The protein resides in the cytoplasm. Its subcellular location is the cytosol. Its activity is regulated as follows. The Rab7 guanyl-nucleotide exchange factor (GEF) activity of the Mon1-Ccz1 complex is autoinhibited by the N-terminal disordered region of Mon1. GEF activity is stimulated by Rab5-mediated recruitment to membranes. In terms of biological role, part of the Mon1-Ccz1 guanyl-nucleotide exchange factor complex specific for Rab7 that promotes the exchange of GDP to GTP, converting Rab7 from an inactive GDP-bound form into an active GTP-bound form. Required for recruitment of Rab7 to endosomal and autophagosomal membranes to mediate endolysosomal and autolysosomal vesicle maturation. Required for fusion of multivesicular bodies and lysosomes but not their formation or trafficking. Involved in the replacement of Rab5 (and possibly Rab4) with Rab7, also known as Rab conversion or the Rab cascade, during endosomal maturation. The Mon1-Ccz1 complex is recruited to phosphatidylinositol 3-phosphate (PtdIns[3]P) enriched membranes by Rab5, which stimulates recruitment and guanyl-nucleotide exchange of Rab7. Together with Rab7 required for autolysosome formation in fat cells and autophagic degradation during starvation-induced basal and developmental autophagy. The protein is Vacuolar fusion protein CCZ1 homolog of Drosophila melanogaster (Fruit fly).